Reading from the N-terminus, the 229-residue chain is Ribonuclease HII (229 aa).

The RNase H type-2 domain occupies 34 to 223; sequence WPVAGADEAG…LRKVEDGPQM (190 aa). The a divalent metal cation site is built by Asp40, Glu41, and Asp131.

Belongs to the RNase HII family. The cofactor is Mn(2+). It depends on Mg(2+) as a cofactor.

The protein resides in the cytoplasm. The enzyme catalyses Endonucleolytic cleavage to 5'-phosphomonoester.. Functionally, endonuclease that specifically degrades the RNA of RNA-DNA hybrids. This is Ribonuclease HII from Rhizobium leguminosarum bv. trifolii (strain WSM2304).